We begin with the raw amino-acid sequence, 119 residues long: Large ribosomal subunit protein bL20 (119 aa).

It belongs to the bacterial ribosomal protein bL20 family.

In terms of biological role, binds directly to 23S ribosomal RNA and is necessary for the in vitro assembly process of the 50S ribosomal subunit. It is not involved in the protein synthesizing functions of that subunit. The sequence is that of Large ribosomal subunit protein bL20 (rplT) from Geobacillus stearothermophilus (Bacillus stearothermophilus).